The primary structure comprises 101 residues: Small ubiquitin-related modifier 1 (101 aa).

At Ser2 the chain carries N-acetylserine. A Phosphoserine modification is found at Ser2. Residue Lys7 forms a Glycyl lysine isopeptide (Lys-Gly) (interchain with G-Cter in SUMO1); alternate linkage. Residue Lys7 forms a Glycyl lysine isopeptide (Lys-Gly) (interchain with G-Cter in SUMO2); alternate linkage. Position 9 is a phosphoserine (Ser9). Glycyl lysine isopeptide (Lys-Gly) (interchain with G-Cter in SUMO2) cross-links involve residues Lys16, Lys17, and Lys23. The segment at 16 to 25 is (Microbial infection) Interaction with Tula hantavirus; that stretch reads KKEGEYIKLK. Residues 20-97 enclose the Ubiquitin-like domain; sequence EYIKLKVIGQ…IEVYQEQTGG (78 aa). Lys25 is covalently cross-linked (Glycyl lysine isopeptide (Lys-Gly) (interchain with G-Cter in SUMO1)). Phosphoserine is present on Ser32. Glycyl lysine isopeptide (Lys-Gly) (interchain with G-Cter in SUMO2) cross-links involve residues Lys37, Lys39, Lys45, and Lys46. A (Microbial infection) Interaction with Tula hantavirus region spans residues 37 to 40; it reads KVKM. Gly97 participates in a covalent cross-link: Glycyl lysine isopeptide (Gly-Lys) (interchain with K-? in acceptor proteins). Positions 98 to 101 are excised as a propeptide; sequence HSTV.

Belongs to the ubiquitin family. SUMO subfamily. Covalently attached to KCNB1; UBE2I increases cross-linking with KCNB1 and PIAS1 decreases cross-links with KCNB1. Interacts with SAE2, RANBP2, PIAS1 and PIAS2. Interacts with PRKN. Covalently attached to a number of proteins such as IKFZ1, PML, RANGAP1, HIPK2, SP100, p53, p73-alpha, MDM2, JUN, DNMT3B and TDG. Also interacts with HIF1A, HIPK2, HIPK3, CHD3, EXOSC9, RAD51 and RAD52. Interacts with USP25 (via ts SIM domain); the interaction weakly sumoylates USP25. Interacts with SIMC1, CASP8AP2, RNF111 and SOBP (via SIM domains). Interacts with BHLHE40/DEC1. Interacts with RWDD3. Interacts with UBE2I/UBC9 and this interaction is enhanced in the presence of RWDD3. Interacts with MTA1. Interacts with SENP2. Interacts with HINT1. In terms of assembly, (Microbial infection) Interacts with Epstein-barr virus BGLF4. As to quaternary structure, (Microbial infection) Interacts (via N-terminus) with Tula hantavirus nucleoprotein. (Microbial infection) Interacts (via N-terminus) with Hantaan hantavirus nucleoprotein. Post-translationally, cleavage of precursor form by SENP1 or SENP2 is necessary for function. In terms of processing, polymeric SUMO1 chains undergo polyubiquitination by RNF4.

The protein resides in the nucleus membrane. It is found in the nucleus speckle. It localises to the cytoplasm. The protein localises to the nucleus. Its subcellular location is the PML body. The protein resides in the cell membrane. Ubiquitin-like protein that can be covalently attached to proteins as a monomer or a lysine-linked polymer. Covalent attachment via an isopeptide bond to its substrates requires prior activation by the E1 complex SAE1-SAE2 and linkage to the E2 enzyme UBE2I, and can be promoted by E3 ligases such as PIAS1-4, RANBP2 or CBX4. This post-translational modification on lysine residues of proteins plays a crucial role in a number of cellular processes such as nuclear transport, DNA replication and repair, mitosis and signal transduction. Involved for instance in targeting RANGAP1 to the nuclear pore complex protein RANBP2. Covalently attached to the voltage-gated potassium channel KCNB1; this modulates the gating characteristics of KCNB1. Polymeric SUMO1 chains are also susceptible to polyubiquitination which functions as a signal for proteasomal degradation of modified proteins. May also regulate a network of genes involved in palate development. Covalently attached to ZFHX3. The sequence is that of Small ubiquitin-related modifier 1 (SUMO1) from Homo sapiens (Human).